The sequence spans 142 residues: 3-hydroxyacyl-[acyl-carrier-protein] dehydratase FabZ (142 aa).

Histidine 47 is an active-site residue.

This sequence belongs to the thioester dehydratase family. FabZ subfamily.

It is found in the cytoplasm. It carries out the reaction a (3R)-hydroxyacyl-[ACP] = a (2E)-enoyl-[ACP] + H2O. Its function is as follows. Involved in unsaturated fatty acids biosynthesis. Catalyzes the dehydration of short chain beta-hydroxyacyl-ACPs and long chain saturated and unsaturated beta-hydroxyacyl-ACPs. The sequence is that of 3-hydroxyacyl-[acyl-carrier-protein] dehydratase FabZ from Thermoanaerobacter sp. (strain X514).